We begin with the raw amino-acid sequence, 201 residues long: IMP cyclohydrolase (201 aa).

The protein belongs to the archaeal IMP cyclohydrolase family.

It carries out the reaction IMP + H2O = 5-formamido-1-(5-phospho-D-ribosyl)imidazole-4-carboxamide. It functions in the pathway purine metabolism; IMP biosynthesis via de novo pathway; IMP from 5-formamido-1-(5-phospho-D-ribosyl)imidazole-4-carboxamide: step 1/1. Functionally, catalyzes the cyclization of 5-formylamidoimidazole-4-carboxamide ribonucleotide to IMP. The chain is IMP cyclohydrolase from Methanococcus maripaludis (strain DSM 14266 / JCM 13030 / NBRC 101832 / S2 / LL).